Here is a 146-residue protein sequence, read N- to C-terminus: Transcriptional regulator MraZ (146 aa).

SpoVT-AbrB domains are found at residues 5–51 (NHPT…PLQE) and 80–123 (GQMV…NHEA).

The protein belongs to the MraZ family. Forms oligomers.

It localises to the cytoplasm. It is found in the nucleoid. The polypeptide is Transcriptional regulator MraZ (Acidobacterium capsulatum (strain ATCC 51196 / DSM 11244 / BCRC 80197 / JCM 7670 / NBRC 15755 / NCIMB 13165 / 161)).